We begin with the raw amino-acid sequence, 369 residues long: Saccharopine dehydrogenase [NAD(+), L-lysine-forming] (369 aa).

The L-saccharopine site is built by Arg-19 and Lys-78. Catalysis depends on Lys-78, which acts as the Proton acceptor. His-96 acts as the Proton donor in catalysis. Residue Gln-101 participates in L-saccharopine binding. Arg-130 lines the NAD(+) pocket. The L-saccharopine site is built by Arg-131 and Phe-135. NAD(+) is bound by residues 203–204 (GR), Asp-227, Thr-231, Tyr-251, and Val-278. Cys-205 and Cys-249 are oxidised to a cystine. Residue 279-281 (SAD) participates in L-saccharopine binding. 318-321 (IDHL) lines the NAD(+) pocket.

It belongs to the AlaDH/PNT family. In terms of assembly, monomer.

The enzyme catalyses L-saccharopine + NAD(+) + H2O = L-lysine + 2-oxoglutarate + NADH + H(+). It functions in the pathway amino-acid biosynthesis; L-lysine biosynthesis via AAA pathway; L-lysine from L-alpha-aminoadipate (fungal route): step 3/3. In terms of biological role, catalyzes the NAD(+)-dependent cleavage of saccharopine to L-lysine and 2-oxoglutarate, the final step in the alpha-aminoadipate (AAA) pathway for lysin biosynthesis. In Yarrowia lipolytica (strain CLIB 122 / E 150) (Yeast), this protein is Saccharopine dehydrogenase [NAD(+), L-lysine-forming].